Consider the following 518-residue polypeptide: RNA-binding protein FUS (518 aa).

Residues methionine 1–tyrosine 14 show a composition bias toward polar residues. The segment at methionine 1–threonine 279 is disordered. Composition is skewed to low complexity over residues glutamine 20–glutamine 63, serine 84–proline 105, and glycine 116–proline 126. Residues glutamine 127–glycine 139 show a composition bias toward gly residues. A compositionally biased stretch (low complexity) spans glutamine 140 to serine 166. Gly residues-rich tracts occupy residues serine 167–tyrosine 178 and serine 186–tyrosine 225. An asymmetric dimethylarginine; alternate mark is found at arginine 217 and arginine 219. Omega-N-methylarginine; alternate occurs at positions 217 and 219. Arginine 235, arginine 237, arginine 241, arginine 244, and arginine 252 each carry asymmetric dimethylarginine. Gly residues predominate over residues arginine 237 to arginine 252. Serine 270 bears the Phosphoserine mark. In terms of domain architecture, RRM spans asparagine 278–arginine 364. Threonine 279 bears the Phosphothreonine mark. A Glycyl lysine isopeptide (Lys-Gly) (interchain with G-Cter in SUMO2) cross-link involves residue lysine 327. Phosphoserine is present on serine 333. 2 disordered regions span residues phenylalanine 368 to glycine 417 and cysteine 437 to tyrosine 518. Asymmetric dimethylarginine occurs at positions 370, 376, 379, 381, and 387. Positions arginine 370–glutamine 414 are enriched in gly residues. Position 400 is an asymmetric dimethylarginine; alternate (arginine 400). Arginine 400 is subject to Omega-N-methylarginine; alternate. A RanBP2-type zinc finger spans residues arginine 415 to aspartate 446. The segment covering glycine 447 to tyrosine 461 has biased composition (gly residues). Over residues glycine 462–glycine 485 the composition is skewed to basic and acidic residues. An asymmetric dimethylarginine mark is found at arginine 466, arginine 468, arginine 473, arginine 477, arginine 479, arginine 483, arginine 487, and arginine 490. Positions phenylalanine 486–proline 500 are enriched in gly residues. At arginine 495 the chain carries Asymmetric dimethylarginine; alternate. Arginine 495 bears the Omega-N-methylarginine; alternate mark. Over residues methionine 503–tyrosine 518 the composition is skewed to basic and acidic residues.

This sequence belongs to the RRM TET family. As to quaternary structure, self-oligomerizes (via N-terminal region). Oligomerization is essential for chromatin binding. Component of nuclear riboprotein complexes. Interacts with ILF3, TDRD3 and SF1. Interacts through its C-terminus with SFRS13A. Interacts with OTUB1 and SARNP. Interacts with LRSAM1. Interacts with SAFB1 in a DNA-dependent manner; this interaction tethers FUS to chromatin. Interacts with MATR3. Interacts with SNRNP70 and POLR2A; these interactions couple RNA transcription and splicing. Interacts (through its RNA-binding domain) with RALY (through its RNA-binding domain); both are components of the same RNPs. Post-translationally, phosphorylated in its N-terminal serine residues upon induced DNA damage. ATM and DNA-PK are able to phosphorylate FUS N-terminal region.

The protein resides in the nucleus. Functionally, DNA/RNA-binding protein that plays a role in various cellular processes such as transcription regulation, RNA splicing, RNA transport, DNA repair and damage response. Binds to ssRNA containing the consensus sequence 5'-AGGUAA-3'. Binds to nascent pre-mRNAs and acts as a molecular mediator between RNA polymerase II and U1 small nuclear ribonucleoprotein thereby coupling transcription and splicing. Also binds its own pre-mRNA and autoregulates its expression; this autoregulation mechanism is mediated by non-sense-mediated decay. Plays a role in DNA repair mechanisms by promoting D-loop formation and homologous recombination during DNA double-strand break repair. In neuronal cells, plays crucial roles in dendritic spine formation and stability, RNA transport, mRNA stability and synaptic homeostasis. The sequence is that of RNA-binding protein FUS (Fus) from Mus musculus (Mouse).